The primary structure comprises 321 residues: Annexin A5 (321 aa).

Position 2 is an N-acetylalanine (Ala-2). 4 Annexin repeats span residues 15 to 86 (FDER…ALMK), 87 to 158 (PSRL…VLLQ), 170 to 242 (AQVE…AVVK), and 246 to 317 (SIPA…LLCG). Lys-29 participates in a covalent cross-link: Glycyl lysine isopeptide (Lys-Gly) (interchain with G-Cter in SUMO1); alternate. Residue Lys-29 forms a Glycyl lysine isopeptide (Lys-Gly) (interchain with G-Cter in SUMO2); alternate linkage. Lys-70, Lys-76, Lys-79, Lys-97, and Lys-101 each carry N6-acetyllysine. Lys-290 is modified (N6-succinyllysine). The [IL]-x-C-x-x-[DE] motif motif lies at 314 to 320 (LLCGGED).

This sequence belongs to the annexin family. Monomer. Binds ATRX and EIF5B. S-nitrosylation is induced by interferon-gamma and oxidatively-modified low-densitity lipoprotein (LDL(ox)) possibly implicating the iNOS-S100A8/9 transnitrosylase complex.

Functionally, this protein is an anticoagulant protein that acts as an indirect inhibitor of the thromboplastin-specific complex, which is involved in the blood coagulation cascade. This is Annexin A5 (ANXA5) from Bos taurus (Bovine).